Reading from the N-terminus, the 222-residue chain is von Willebrand factor C domain-containing protein 2-like (222 aa).

A signal peptide spans 1–21; the sequence is MALHIHEACILLLVIPGLVTS. 2 VWFC domains span residues 51–110 and 114–172; these read KGCV…PECK and NFCE…PVCK.

Peripherally associated with AMPAR complex. AMPAR complex consists of an inner core made of 4 pore-forming GluA/GRIA proteins (GRIA1, GRIA2, GRIA3 and GRIA4) and 4 major auxiliary subunits arranged in a twofold symmetry. One of the two pairs of distinct binding sites is occupied either by CNIH2, CNIH3 or CACNG2, CACNG3. The other harbors CACNG2, CACNG3, CACNG4, CACNG8 or GSG1L. This inner core of AMPAR complex is complemented by outer core constituents binding directly to the GluA/GRIA proteins at sites distinct from the interaction sites of the inner core constituents. Outer core constituents include at least PRRT1, PRRT2, CKAMP44/SHISA9, FRRS1L and NRN1. The proteins of the inner and outer core serve as a platform for other, more peripherally associated AMPAR constituents, including VWC2L. Alone or in combination, these auxiliary subunits control the gating and pharmacology of the AMPAR complex and profoundly impact their biogenesis and protein processing. In terms of tissue distribution, predominantly expressed in the brain (at protein level). Also detected in bones, including femur and calvaria, heart, lung and kidney. Isoform 5 is predominant in lung and heart, compared to isoforms 1 and 3. Isoform 4 is expressed in femur and calvaria at higher levels than isoforms 1 and 5. Isoforms 1 and 4 are expressed at higher levels than isoform 5 in kidney and brain.

It localises to the secreted. Its subcellular location is the synapse. Its function is as follows. May play a role in neurogenesis. May promote matrix mineralization, but has been shown to weakly, but significantly inhibit BMP2 and BMP6 activity in a preosteoblastic cell line. The chain is von Willebrand factor C domain-containing protein 2-like (Vwc2l) from Mus musculus (Mouse).